We begin with the raw amino-acid sequence, 416 residues long: Casein kinase I isoform epsilon (416 aa).

Residues 9–277 form the Protein kinase domain; the sequence is YRLGRKIGSG…YLRQLFRNLF (269 aa). ATP-binding positions include 15–23 and Lys38; that span reads IGSGSFGDI. The active-site Proton acceptor is the Asp128. The span at 301-318 shows a compositional bias: basic and acidic residues; that stretch reads PEDMDRERREHEREERMG. The tract at residues 301–416 is disordered; that stretch reads PEDMDRERRE…TSVPFDHLGK (116 aa). Residues 324–338 are compositionally biased toward low complexity; that stretch reads ATRALPPGPPAGATG. Composition is skewed to polar residues over residues 350-365 and 400-409; these read STPT…TSPR and SRISASQTSV.

The protein belongs to the protein kinase superfamily. CK1 Ser/Thr protein kinase family. Casein kinase I subfamily. As to quaternary structure, monomer. Component of the circadian core oscillator, which includes the CRY proteins, CLOCK, or NPAS2, BMAL1 or BMAL2, CSNK1E, and the PER proteins.

It is found in the cytoplasm. It catalyses the reaction L-seryl-[protein] + ATP = O-phospho-L-seryl-[protein] + ADP + H(+). The catalysed reaction is L-threonyl-[protein] + ATP = O-phospho-L-threonyl-[protein] + ADP + H(+). Functionally, casein kinases are operationally defined by their preferential utilization of acidic proteins such as caseins as substrates. Can phosphorylate a large number of proteins. Participates in Wnt signaling. Phosphorylates DVL1. Central component of the circadian clock. May act as a negative regulator of circadian rhythmicity by phosphorylating PER1 and PER2. Retains PER1 in the cytoplasm. The chain is Casein kinase I isoform epsilon (CSNK1E) from Gallus gallus (Chicken).